The following is a 122-amino-acid chain: Ig heavy chain V region M603 (122 aa).

One can recognise an Ig-like domain in the interval 1-121; it reads EVKLVESGGG…WGAGTTVTVS (121 aa).

This Mus musculus (Mouse) protein is Ig heavy chain V region M603.